Consider the following 105-residue polypeptide: Serine protease inhibitor Kazal-type 8 (105 aa).

Positions 1–21 are cleaved as a signal peptide; it reads MKVIFSVAVLVLASSVWTSLA. Cystine bridges form between Cys44/Cys78, Cys51/Cys75, and Cys64/Cys96. The Kazal-like domain occupies 44 to 98; it reads CIKNIQLCWILSYFKVSEPICGSNQVTYEGECHLCSGILYEDRTVIKVHDGPCEH.

In terms of tissue distribution, expressed in epydiymis, in the cauda, corpus and caput.

It is found in the secreted. Probable serine protease inhibitor. This Mus musculus (Mouse) protein is Serine protease inhibitor Kazal-type 8 (Spink8).